The following is a 367-amino-acid chain: GMP synthase [glutamine-hydrolyzing] subunit B (367 aa).

One can recognise a GMPS ATP-PPase domain in the interval 2–190 (FDPASFVEEI…LKLPKEISER (189 aa)). 29 to 35 (SGGVDST) contributes to the ATP binding site.

In terms of assembly, heterodimer composed of a glutamine amidotransferase subunit (A) and a GMP-binding subunit (B).

It catalyses the reaction XMP + L-glutamine + ATP + H2O = GMP + L-glutamate + AMP + diphosphate + 2 H(+). The protein operates within purine metabolism; GMP biosynthesis; GMP from XMP (L-Gln route): step 1/1. In terms of biological role, catalyzes the synthesis of GMP from XMP. In Saccharolobus solfataricus (strain ATCC 35092 / DSM 1617 / JCM 11322 / P2) (Sulfolobus solfataricus), this protein is GMP synthase [glutamine-hydrolyzing] subunit B (guaAB).